Consider the following 97-residue polypeptide: Small ribosomal subunit protein uS19 (97 aa).

The protein belongs to the universal ribosomal protein uS19 family.

Its function is as follows. Protein S19 forms a complex with S13 that binds strongly to the 16S ribosomal RNA. In Salinibacter ruber (strain DSM 13855 / M31), this protein is Small ribosomal subunit protein uS19.